Here is a 567-residue protein sequence, read N- to C-terminus: Proline--tRNA ligase (567 aa).

Belongs to the class-II aminoacyl-tRNA synthetase family. ProS type 1 subfamily. As to quaternary structure, homodimer.

Its subcellular location is the cytoplasm. The enzyme catalyses tRNA(Pro) + L-proline + ATP = L-prolyl-tRNA(Pro) + AMP + diphosphate. In terms of biological role, catalyzes the attachment of proline to tRNA(Pro) in a two-step reaction: proline is first activated by ATP to form Pro-AMP and then transferred to the acceptor end of tRNA(Pro). As ProRS can inadvertently accommodate and process non-cognate amino acids such as alanine and cysteine, to avoid such errors it has two additional distinct editing activities against alanine. One activity is designated as 'pretransfer' editing and involves the tRNA(Pro)-independent hydrolysis of activated Ala-AMP. The other activity is designated 'posttransfer' editing and involves deacylation of mischarged Ala-tRNA(Pro). The misacylated Cys-tRNA(Pro) is not edited by ProRS. The protein is Proline--tRNA ligase of Staphylococcus aureus (strain Mu3 / ATCC 700698).